Reading from the N-terminus, the 424-residue chain is Tyrosine--tRNA ligase (424 aa).

Tyr37 serves as a coordination point for L-tyrosine. A 'HIGH' region motif is present at residues 42–51 (PTADSLHLGH). L-tyrosine contacts are provided by Tyr175 and Gln179. The 'KMSKS' region signature appears at 235–239 (KFGKT). Lys238 serves as a coordination point for ATP. The S4 RNA-binding domain maps to 357-414 (ADLMQALVDAELQPSRGQARKTIASNAVTINGEKQSDPEYIFNDEDRLFGRYTLLRRG).

The protein belongs to the class-I aminoacyl-tRNA synthetase family. TyrS type 1 subfamily. As to quaternary structure, homodimer.

The protein localises to the cytoplasm. The catalysed reaction is tRNA(Tyr) + L-tyrosine + ATP = L-tyrosyl-tRNA(Tyr) + AMP + diphosphate + H(+). Catalyzes the attachment of tyrosine to tRNA(Tyr) in a two-step reaction: tyrosine is first activated by ATP to form Tyr-AMP and then transferred to the acceptor end of tRNA(Tyr). In Salmonella agona (strain SL483), this protein is Tyrosine--tRNA ligase.